The sequence spans 280 residues: 30 kDa immediate-early protein 2 (280 aa).

Residues 36–164 (SEEEQGEEVE…KKSKRISELD (129 aa)) are disordered. Low complexity-rich tracts occupy residues 47–67 (RGAT…TSPT), 90–101 (SSSSSSCSSASD), and 132–147 (AASS…SSGG).

Its function is as follows. Activates the E1.7 promoter. This activation is augmented by the IE1 protein. It down-regulates the transcription of genes under the control of the major IE promoter. This Human cytomegalovirus (strain Towne) (HHV-5) protein is 30 kDa immediate-early protein 2 (UL122).